A 329-amino-acid chain; its full sequence is GTPase Obg (329 aa).

The Obg domain occupies 1 to 159 (MQFIDQARIT…WFLQLELKLL (159 aa)). Residues 160-328 (AEVGIIGLPN…LLAQVWKELG (169 aa)) enclose the OBG-type G domain. Residues 166–173 (GLPNAGKS), 191–195 (FTTLV), 213–216 (DIPG), 280–283 (NKQE), and 309–311 (SAA) each bind ATP. Residues S173 and T193 each coordinate Mg(2+).

This sequence belongs to the TRAFAC class OBG-HflX-like GTPase superfamily. OBG GTPase family. Monomer. The cofactor is Mg(2+).

It localises to the cytoplasm. In terms of biological role, an essential GTPase which binds GTP, GDP and possibly (p)ppGpp with moderate affinity, with high nucleotide exchange rates and a fairly low GTP hydrolysis rate. Plays a role in control of the cell cycle, stress response, ribosome biogenesis and in those bacteria that undergo differentiation, in morphogenesis control. This is GTPase Obg from Prochlorococcus marinus (strain MIT 9303).